A 1846-amino-acid polypeptide reads, in one-letter code: Brefeldin A-inhibited guanine nucleotide-exchange protein 1 (1846 aa).

The interval 2–224 is DCB; DCB:DCB domain and DCB:HUS domain interaction; sequence YEGKKTKNMF…QEAKQMERER (223 aa). S52 is modified (phosphoserine). Disordered regions lie at residues 217–248, 264–302, and 347–410; these read AKQM…HLRY, DLDP…DQAT, and VSAS…SPGA. Basic and acidic residues predominate over residues 267–277; the sequence is PQTHDVDKSLQ. S286, S289, S290, S394, and S407 each carry phosphoserine. Positions 391–406 are enriched in polar residues; it reads SVSSNDTQESGNSSGP. Residues 554–574 form an HUS; DCB:HUS domain interaction region; it reads ADAQSVVDIYVNYDCDLNAAN. The interval 631–684 is disordered; the sequence is PNSQTTLGQEKPSEQEISEIKHPETINRYGSLNSLESTSSSGIGSYSTQMSGTD. Basic and acidic residues predominate over residues 641-655; sequence KPSEQEISEIKHPET. The span at 661-681 shows a compositional bias: low complexity; the sequence is SLNSLESTSSSGIGSYSTQMS. The SEC7 domain maps to 688 to 877; that stretch reads QFEVLKQQKE…SAIYNEIAGK (190 aa). The Nuclear localization signal (NLS) signature appears at 708–712; it reads KKPKR. Phosphoserine occurs at positions 1076, 1563, and 1566. The interval 1571-1600 is disordered; the sequence is DSAQPRSSDNRQQAPLVSVSPASEEVSKGR. A compositionally biased stretch (polar residues) spans 1574 to 1585; sequence QPRSSDNRQQAP.

As to quaternary structure, homodimer. Interacts with ARFGEF2/BIG2; both proteins are probably part of the same or very similar macromolecular complexes. Interacts with FKBP2. Interacts with MYO9B. Interacts with PRKAR1A and PRKAR2A. Interacts with PPP1CC. Interacts with NCL, FBL, NUP62 and U3 small nucleolar RNA. Interacts with DPY30. Interacts with PDE3A. Interacts with KANK1. Interacts with TBC1D22A and TBC1D22B. Post-translationally, phosphorylated. In vitro phosphorylated by PKA reducing its GEF activity and dephosphorylated by phosphatase PP1.

The protein localises to the cytoplasm. It is found in the perinuclear region. The protein resides in the golgi apparatus. Its subcellular location is the trans-Golgi network. It localises to the nucleus. The protein localises to the nucleolus. It is found in the nucleus matrix. The protein resides in the membrane. Its activity is regulated as follows. Inhibited by brefeldin A. In terms of biological role, promotes guanine-nucleotide exchange on ARF1 and ARF3. Promotes the activation of ARF1/ARF3 through replacement of GDP with GTP. Involved in vesicular trafficking. Required for the maintenance of Golgi structure; the function may be independent of its GEF activity. Required for the maturation of integrin beta-1 in the Golgi. Involved in the establishment and persistence of cell polarity during directed cell movement in wound healing. Proposed to act as A kinase-anchoring protein (AKAP) and may mediate crosstalk between Arf and PKA pathways. Inhibits GAP activity of MYO9B probably through competitive RhoA binding. The function in the nucleus remains to be determined. This is Brefeldin A-inhibited guanine nucleotide-exchange protein 1 (Arfgef1) from Rattus norvegicus (Rat).